The primary structure comprises 134 residues: MVFAAWYLKFAFFVALAFSIIGGSMASSLVLPHASELKGVWQLSDKHQQCDVSLTDQPLPEGSIWSLNGDNDCLAYMFGEVPAGWRPTPDGLTITDEQGSGLAFFANEPDGWFARFADGRELMMKPNKTNKKNE.

The signal sequence occupies residues 1-26 (MVFAAWYLKFAFFVALAFSIIGGSMA). An intrachain disulfide couples cysteine 50 to cysteine 73.

It belongs to the protease inhibitor I38 family.

It localises to the periplasm. Functionally, inhibitor of the alkaline protease. The sequence is that of Alkaline proteinase inhibitor (inh) from Photorhabdus luminescens (Xenorhabdus luminescens).